We begin with the raw amino-acid sequence, 370 residues long: Glucan endo-1,3-beta-glucosidase, basic vacuolar isoform GLB (370 aa).

The first 32 residues, 1–32, serve as a signal peptide directing secretion; sequence MSTSDKHNTPQMAAITLLGLLLVASTIEIAGA. Position 33 is a pyrrolidone carboxylic acid (glutamine 33). Glutamate 128 functions as the Proton donor in the catalytic mechanism. Glutamate 273 serves as the catalytic Nucleophile. The propeptide at 349-370 is removed in mature form; the sequence is VSGGVWDSSVETNATASLISEM. An N-linked (GlcNAc...) asparagine glycan is attached at asparagine 361.

The protein belongs to the glycosyl hydrolase 17 family. In terms of tissue distribution, is expressed primarily in epidermal cell of healthy plant, and following induction by ethylene, accumulates in mesophyll cells.

The protein resides in the vacuole. The catalysed reaction is Hydrolysis of (1-&gt;3)-beta-D-glucosidic linkages in (1-&gt;3)-beta-D-glucans.. Implicated in the defense of plants against pathogens. This chain is Glucan endo-1,3-beta-glucosidase, basic vacuolar isoform GLB, found in Nicotiana tabacum (Common tobacco).